We begin with the raw amino-acid sequence, 148 residues long: Probable transporter PD_1893 (148 aa).

The next 4 membrane-spanning stretches (helical) occupy residues 11 to 31 (FTVALAAGLLFGFGLALSEMI), 48 to 68 (NPSLLFVLGSALAVAFPGMAL), 93 to 113 (IVFGSAIFGTGWGLTGLCPGP), and 118 to 138 (LSTGLGSVLLFVAAMAAGMII).

The protein belongs to the TsuA/YedE (TC 9.B.102) family.

The protein localises to the cell inner membrane. The polypeptide is Probable transporter PD_1893 (Xylella fastidiosa (strain Temecula1 / ATCC 700964)).